The primary structure comprises 778 residues: Endonuclease MutS2 (778 aa).

Gly-329–Thr-336 contacts ATP. The Smr domain maps to Leu-703–Lys-778.

Belongs to the DNA mismatch repair MutS family. MutS2 subfamily. Homodimer. Binds to stalled ribosomes, contacting rRNA.

In terms of biological role, endonuclease that is involved in the suppression of homologous recombination and thus may have a key role in the control of bacterial genetic diversity. Functionally, acts as a ribosome collision sensor, splitting the ribosome into its 2 subunits. Detects stalled/collided 70S ribosomes which it binds and splits by an ATP-hydrolysis driven conformational change. Acts upstream of the ribosome quality control system (RQC), a ribosome-associated complex that mediates the extraction of incompletely synthesized nascent chains from stalled ribosomes and their subsequent degradation. Probably generates substrates for RQC. In Streptococcus suis (strain 98HAH33), this protein is Endonuclease MutS2.